A 242-amino-acid polypeptide reads, in one-letter code: Uridylate kinase (242 aa).

15 to 18 (KLSG) serves as a coordination point for ATP. The segment at 23–28 (GAEGFG) is involved in allosteric activation by GTP. Gly-57 provides a ligand contact to UMP. ATP contacts are provided by Gly-58 and Arg-62. Residues Asp-77 and 138-145 (TGNPFFTT) each bind UMP. Residues Thr-165, Tyr-171, and Asp-174 each contribute to the ATP site.

This sequence belongs to the UMP kinase family. In terms of assembly, homohexamer.

Its subcellular location is the cytoplasm. It carries out the reaction UMP + ATP = UDP + ADP. It participates in pyrimidine metabolism; CTP biosynthesis via de novo pathway; UDP from UMP (UMPK route): step 1/1. Allosterically activated by GTP. Inhibited by UTP. Catalyzes the reversible phosphorylation of UMP to UDP. This is Uridylate kinase from Photorhabdus laumondii subsp. laumondii (strain DSM 15139 / CIP 105565 / TT01) (Photorhabdus luminescens subsp. laumondii).